Consider the following 701-residue polypeptide: Peptide transporter 3 (701 aa).

9 helical membrane passes run 29-49 (FSFY…HEFS), 55-75 (FIYH…SIMA), 91-111 (IYVV…SYPI), 119-139 (GLFV…AFAA), 154-174 (FSFF…ITPI), 188-208 (FPLA…LFLM), 269-289 (GLLN…LFDQ), 318-338 (INPV…YPAL), and 351-371 (AVGG…QLKV). N391 and N432 each carry an N-linked (GlcNAc...) asparagine glycan. 3 consecutive transmembrane segments (helical) span residues 575–595 (ILWS…LSVT), 611–631 (VLTA…MMIS), and 641–661 (LEFF…ILLA).

The protein belongs to the major facilitator superfamily. Proton-dependent oligopeptide transporter (POT/PTR) (TC 2.A.17) family. In terms of tissue distribution, expressed in the AVA interneuron.

It localises to the membrane. Functionally, neuron-specific, H(+)-coupled oligopeptide transporter with broad specificity towards di- and tripeptides in a Na(+) and Cl(-)-independent manner. Shows H(+) channel activity in the absence of peptide substrates. The polypeptide is Peptide transporter 3 (pept-3) (Caenorhabditis elegans).